A 291-amino-acid chain; its full sequence is MLDFYSQRYLHSERQAWQERIEQGQIEVDGKTVDPTYPLQAGQTLTYWRSPWVEPEVPLQLSVLHRDEDLWAIDKPSGLPVLPGGDFVYHTVLEQLKIQYPQESLFPLHRLGTGTSGLLLLGRSTLGRRELSRQFREHICRKIYRTVIGPCDLPEKFECHQAIGKIPYPQLGYIYAASSHGKPAQSYGRILARSPEKTWLEVEIRTGRPHQIRIHLASLGYPLLGDRLYGPGGVPINCRTARPSDGGYTLHSYQLGFLHLHTQQAIKLTAPLPPELITPEVKTIALETEKH.

This sequence belongs to the pseudouridine synthase RluA family.

The enzyme catalyses a uridine in RNA = a pseudouridine in RNA. This is an uncharacterized protein from Synechocystis sp. (strain ATCC 27184 / PCC 6803 / Kazusa).